Here is a 413-residue protein sequence, read N- to C-terminus: Ribulose bisphosphate carboxylase large chain (413 aa).

The substrate site is built by Asn100 and Thr150. Residue Lys152 is the Proton acceptor of the active site. A substrate-binding site is contributed by Lys154. Mg(2+)-binding residues include Lys178, Asp180, and Glu181. Lys178 bears the N6-carboxylysine mark. Residue His271 is the Proton acceptor of the active site. Residues Arg272, His304, and Ser356 each coordinate substrate.

It belongs to the RuBisCO large chain family. Type I subfamily. As to quaternary structure, heterohexadecamer of 8 large chains and 8 small chains; disulfide-linked. The disulfide link is formed within the large subunit homodimers. Requires Mg(2+) as cofactor. The disulfide bond which can form in the large chain dimeric partners within the hexadecamer appears to be associated with oxidative stress and protein turnover.

The protein localises to the plastid. It is found in the chloroplast. The enzyme catalyses 2 (2R)-3-phosphoglycerate + 2 H(+) = D-ribulose 1,5-bisphosphate + CO2 + H2O. It carries out the reaction D-ribulose 1,5-bisphosphate + O2 = 2-phosphoglycolate + (2R)-3-phosphoglycerate + 2 H(+). Its function is as follows. RuBisCO catalyzes two reactions: the carboxylation of D-ribulose 1,5-bisphosphate, the primary event in carbon dioxide fixation, as well as the oxidative fragmentation of the pentose substrate in the photorespiration process. Both reactions occur simultaneously and in competition at the same active site. The chain is Ribulose bisphosphate carboxylase large chain (rbcL) from Adiantum pedatum (Northern maidenhair fern).